The following is a 177-amino-acid chain: ATP-dependent protease subunit HslV (177 aa).

Residue T4 is part of the active site. Na(+) contacts are provided by S159, C162, and T165.

The protein belongs to the peptidase T1B family. HslV subfamily. A double ring-shaped homohexamer of HslV is capped on each side by a ring-shaped HslU homohexamer. The assembly of the HslU/HslV complex is dependent on binding of ATP.

The protein localises to the cytoplasm. It carries out the reaction ATP-dependent cleavage of peptide bonds with broad specificity.. Allosterically activated by HslU binding. Its function is as follows. Protease subunit of a proteasome-like degradation complex believed to be a general protein degrading machinery. The protein is ATP-dependent protease subunit HslV of Mesorhizobium japonicum (strain LMG 29417 / CECT 9101 / MAFF 303099) (Mesorhizobium loti (strain MAFF 303099)).